Here is a 37-residue protein sequence, read N- to C-terminus: MTTFSSFPSIFVPLVGLVFPAIAMASLSLYVQKTKIF.

A helical transmembrane segment spans residues Ile10–Tyr30.

Belongs to the PsaI family.

It is found in the plastid. The protein localises to the chloroplast thylakoid membrane. Functionally, may help in the organization of the PsaL subunit. The polypeptide is Photosystem I reaction center subunit VIII (Gossypium hirsutum (Upland cotton)).